The primary structure comprises 394 residues: Arogenate dehydratase 2 (394 aa).

A disordered region spans residues 1-24; it reads MAATTTLRSPKIPHPPPESTPSNL. The transit peptide at 1–47 directs the protein to the chloroplast; that stretch reads MAATTTLRSPKIPHPPPESTPSNLSYLSQISLTPVPKRRRFISIYAC. Residues 108–283 form the Prephenate dehydratase domain; sequence RVAYQGVRGA…NVTRFLMLAR (176 aa). The ACT domain occupies 297–388; it reads SVVFSLDEGP…TFLRVLGSYP (92 aa).

Expressed at low levels in petals (corollas and tubes), stems, leaves, pistils, stamens, ovaries and sepals.

It is found in the plastid. Its subcellular location is the chloroplast stroma. It carries out the reaction prephenate + H(+) = 3-phenylpyruvate + CO2 + H2O. It catalyses the reaction L-arogenate + H(+) = L-phenylalanine + CO2 + H2O. It functions in the pathway amino-acid biosynthesis; L-phenylalanine biosynthesis; L-phenylalanine from L-arogenate: step 1/1. Functionally, converts the prephenate and L-arogenate produced from the shikimate-chorismate pathway into 3-phenylpyruvate and phenylalanine (Phe), respectively. Involved in floral volatile benzenoids and phenylpropanoids (FVBP) production. In Petunia hybrida (Petunia), this protein is Arogenate dehydratase 2.